The sequence spans 459 residues: Argininosuccinate lyase (459 aa).

This sequence belongs to the lyase 1 family. Argininosuccinate lyase subfamily.

It localises to the cytoplasm. It carries out the reaction 2-(N(omega)-L-arginino)succinate = fumarate + L-arginine. It functions in the pathway amino-acid biosynthesis; L-arginine biosynthesis; L-arginine from L-ornithine and carbamoyl phosphate: step 3/3. The protein is Argininosuccinate lyase of Geobacillus thermodenitrificans (strain NG80-2).